The following is a 453-amino-acid chain: Cytochrome b-c1 complex subunit 2, mitochondrial (453 aa).

A mitochondrion-targeting transit peptide spans 1–14 (MKLLTRAGSFSRFY). An N6-acetyllysine mark is found at Lys-66, Lys-199, and Lys-250.

It belongs to the peptidase M16 family. UQCRC2/QCR2 subfamily. As to quaternary structure, component of the ubiquinol-cytochrome c oxidoreductase (cytochrome b-c1 complex, complex III, CIII), a multisubunit enzyme composed of 11 subunits. The complex is composed of 3 respiratory subunits cytochrome b, cytochrome c1 and Rieske protein UQCRFS1, 2 core protein subunits UQCRC1/QCR1 and UQCRC2/QCR2, and 6 low-molecular weight protein subunits UQCRH/QCR6, UQCRB/QCR7, UQCRQ/QCR8, UQCR10/QCR9, UQCR11/QCR10 and subunit 9, the cleavage product of Rieske protein UQCRFS1. The complex exists as an obligatory dimer and forms supercomplexes (SCs) in the inner mitochondrial membrane with NADH-ubiquinone oxidoreductase (complex I, CI) and cytochrome c oxidase (complex IV, CIV), resulting in different assemblies (supercomplex SCI(1)III(2)IV(1) and megacomplex MCI(2)III(2)IV(2)). Interacts with RAB5IF. Interacts with STMP1.

It is found in the mitochondrion inner membrane. Its function is as follows. Component of the ubiquinol-cytochrome c oxidoreductase, a multisubunit transmembrane complex that is part of the mitochondrial electron transport chain which drives oxidative phosphorylation. The respiratory chain contains 3 multisubunit complexes succinate dehydrogenase (complex II, CII), ubiquinol-cytochrome c oxidoreductase (cytochrome b-c1 complex, complex III, CIII) and cytochrome c oxidase (complex IV, CIV), that cooperate to transfer electrons derived from NADH and succinate to molecular oxygen, creating an electrochemical gradient over the inner membrane that drives transmembrane transport and the ATP synthase. The cytochrome b-c1 complex catalyzes electron transfer from ubiquinol to cytochrome c, linking this redox reaction to translocation of protons across the mitochondrial inner membrane, with protons being carried across the membrane as hydrogens on the quinol. In the process called Q cycle, 2 protons are consumed from the matrix, 4 protons are released into the intermembrane space and 2 electrons are passed to cytochrome c. The 2 core subunits UQCRC1/QCR1 and UQCRC2/QCR2 are homologous to the 2 mitochondrial-processing peptidase (MPP) subunits beta-MPP and alpha-MPP respectively, and they seem to have preserved their MPP processing properties. May be involved in the in situ processing of UQCRFS1 into the mature Rieske protein and its mitochondrial targeting sequence (MTS)/subunit 9 when incorporated into complex III. The protein is Cytochrome b-c1 complex subunit 2, mitochondrial (UQCRC2) of Homo sapiens (Human).